We begin with the raw amino-acid sequence, 225 residues long: UPF0758 protein XCV4028 (225 aa).

Positions 102 to 224 (ALSDPPSVGR…PVSFAERGWL (123 aa)) constitute an MPN domain. Histidine 173, histidine 175, and aspartate 186 together coordinate Zn(2+). Residues 173 to 186 (HNHPSGNPEPSEAD) carry the JAMM motif motif.

It belongs to the UPF0758 family.

This Xanthomonas euvesicatoria pv. vesicatoria (strain 85-10) (Xanthomonas campestris pv. vesicatoria) protein is UPF0758 protein XCV4028.